Reading from the N-terminus, the 88-residue chain is Translation initiation factor IF-1 2 (88 aa).

Residues 1-72 form the S1-like domain; it reads MAKEELIELQ…TKGRINFRHK (72 aa).

The protein belongs to the IF-1 family. Component of the 30S ribosomal translation pre-initiation complex which assembles on the 30S ribosome in the order IF-2 and IF-3, IF-1 and N-formylmethionyl-tRNA(fMet); mRNA recruitment can occur at any time during PIC assembly.

It localises to the cytoplasm. Functionally, one of the essential components for the initiation of protein synthesis. Stabilizes the binding of IF-2 and IF-3 on the 30S subunit to which N-formylmethionyl-tRNA(fMet) subsequently binds. Helps modulate mRNA selection, yielding the 30S pre-initiation complex (PIC). Upon addition of the 50S ribosomal subunit IF-1, IF-2 and IF-3 are released leaving the mature 70S translation initiation complex. This Bordetella avium (strain 197N) protein is Translation initiation factor IF-1 2.